The following is an 89-amino-acid chain: Small ribosomal subunit protein uS15 (89 aa).

Belongs to the universal ribosomal protein uS15 family. In terms of assembly, part of the 30S ribosomal subunit. Forms a bridge to the 50S subunit in the 70S ribosome, contacting the 23S rRNA.

In terms of biological role, one of the primary rRNA binding proteins, it binds directly to 16S rRNA where it helps nucleate assembly of the platform of the 30S subunit by binding and bridging several RNA helices of the 16S rRNA. Functionally, forms an intersubunit bridge (bridge B4) with the 23S rRNA of the 50S subunit in the ribosome. This chain is Small ribosomal subunit protein uS15, found in Burkholderia mallei (strain NCTC 10247).